A 476-amino-acid chain; its full sequence is ESRRGGGGPAAAAAAAGDPRGPMPGFGAPQHTIPTNVNVMQPSRVADLGALAHSAGFRIEDLANFSTNNLFNLKPNTHAYTSDPLQFGNYGKSISPTDLATTAAAAAAVTAVDPQALLQQKGVQPNLVALRTHNNDNWGESSMADTSPRTDTSTDPDIDIDERNQMFEQGQLAAPTASDSSDKSRDKLDHKSLRRLAQNREAARKSRLRKKAYIQNLESSRLKLTQLEQELQRARQQGIFISSSGDQSQSASGNGAVAFDMEYARWLEEHNKHINELRAAANAHAGDDDLRKIVDSIMSQYDEFFRLKGVAAKADVFHVLSGMWKTPAERCFMWLGGFRSSELLKLLAGQLEPLTEQQLTGICNLQQSSQQAEDALSQGMEALQQSLAETLASGSLGPAGSSGNVASYMGQMAMAMGKLGTLENFLRQADNLRLQTLQQMQRILTTRQSARALLAISDYFSRLRALSSLWLARPRE.

Disordered regions lie at residues 1–29, 133–159, and 171–207; these read ESRR…FGAP, HNND…PDID, and QLAA…RKSR. The segment covering 10-25 has biased composition (low complexity); the sequence is AAAAAAAGDPRGPMPG. The span at 135-144 shows a compositional bias: polar residues; that stretch reads NDNWGESSMA. A compositionally biased stretch (basic and acidic residues) spans 180–191; sequence SSDKSRDKLDHK. A bZIP domain is found at 189 to 252; the sequence is DHKSLRRLAQ…SSGDQSQSAS (64 aa). The interval 191 to 211 is basic motif; it reads KSLRRLAQNREAARKSRLRKK. Residues 201–242 adopt a coiled-coil conformation; sequence EAARKSRLRKKAYIQNLESSRLKLTQLEQELQRARQQGIFIS. The interval 217-231 is leucine-zipper; the sequence is LESSRLKLTQLEQEL. One can recognise a DOG1 domain in the interval 256–473; that stretch reads AVAFDMEYAR…RALSSLWLAR (218 aa).

It belongs to the bZIP family. In terms of assembly, binds DNA as a dimer.

The protein resides in the nucleus. Transcriptional activator that binds specifically to the DNA sequence 5'-TGACG-3'. Recognizes ocs elements like the as-1 motif of the cauliflower mosaic virus 35S promoter. Binding to the as-1-like cis elements mediate auxin- and salicylic acid-inducible transcription. Binds to the hexamer motif 5'-ACGTCA-3' of histone gene promoters. The chain is Transcription factor HBP-1b(c1) from Triticum aestivum (Wheat).